We begin with the raw amino-acid sequence, 249 residues long: Small ribosomal subunit protein uS3 (249 aa).

A KH type-2 domain is found at 39-107; the sequence is VRAMLKKRLY…EVHLNIVEIR (69 aa). The disordered stretch occupies residues 215–249; that stretch reads LDKRLATESGPAGEGGGRERGDRPDRGDRGRRDRG. Residues 230–249 show a composition bias toward basic and acidic residues; the sequence is GGRERGDRPDRGDRGRRDRG.

This sequence belongs to the universal ribosomal protein uS3 family. Part of the 30S ribosomal subunit. Forms a tight complex with proteins S10 and S14.

Functionally, binds the lower part of the 30S subunit head. Binds mRNA in the 70S ribosome, positioning it for translation. In Caulobacter sp. (strain K31), this protein is Small ribosomal subunit protein uS3.